The following is a 218-amino-acid chain: MTNLTLDVQTAEGTTNGSVDLPAEIFDREVSVALLHQVVNAQLAAARQGTHSTKTRAEVRGGGRKPFRQKGTGRARQGSIRAPHFTGGGISHGPKPRDYAQRTPKKMIKAALYGALSDRARNERIHVISELVPGQAPSTKSAKAFIERLTERKSVLLVIGREDINAQKSANNLPGVHILAADQLNTYDVLNSDDIVFSVEALHTFINRATGAAQEEQN.

Residues 46–100 are disordered; it reads ARQGTHSTKTRAEVRGGGRKPFRQKGTGRARQGSIRAPHFTGGGISHGPKPRDYA. Positions 62-73 are enriched in basic residues; the sequence is GGRKPFRQKGTG.

It belongs to the universal ribosomal protein uL4 family. As to quaternary structure, part of the 50S ribosomal subunit.

Its function is as follows. One of the primary rRNA binding proteins, this protein initially binds near the 5'-end of the 23S rRNA. It is important during the early stages of 50S assembly. It makes multiple contacts with different domains of the 23S rRNA in the assembled 50S subunit and ribosome. In terms of biological role, forms part of the polypeptide exit tunnel. The protein is Large ribosomal subunit protein uL4 of Corynebacterium efficiens (strain DSM 44549 / YS-314 / AJ 12310 / JCM 11189 / NBRC 100395).